We begin with the raw amino-acid sequence, 194 residues long: Exopolysaccharide II synthesis transcriptional activator ExpG (194 aa).

The 136-residue stretch at 49 to 184 (YFELARVMER…AFQTLHRLEL (136 aa)) folds into the HTH marR-type domain.

Functionally, transcriptional activator of genes for galactoglucan synthesis (exopolysaccharide II or EPS II). This is Exopolysaccharide II synthesis transcriptional activator ExpG (expG) from Rhizobium meliloti (strain 1021) (Ensifer meliloti).